The following is a 243-amino-acid chain: 4-hydroxy-tetrahydrodipicolinate reductase (243 aa).

NAD(+)-binding positions include 9-14, 78-80, and 104-107; these read GANGKM, GTS, and APNF. His134 (proton donor/acceptor) is an active-site residue. Residue His135 participates in (S)-2,3,4,5-tetrahydrodipicolinate binding. Residue Lys138 is the Proton donor of the active site. 144–145 is a binding site for (S)-2,3,4,5-tetrahydrodipicolinate; sequence GT.

This sequence belongs to the DapB family.

The protein localises to the cytoplasm. The catalysed reaction is (S)-2,3,4,5-tetrahydrodipicolinate + NAD(+) + H2O = (2S,4S)-4-hydroxy-2,3,4,5-tetrahydrodipicolinate + NADH + H(+). It catalyses the reaction (S)-2,3,4,5-tetrahydrodipicolinate + NADP(+) + H2O = (2S,4S)-4-hydroxy-2,3,4,5-tetrahydrodipicolinate + NADPH + H(+). Its pathway is amino-acid biosynthesis; L-lysine biosynthesis via DAP pathway; (S)-tetrahydrodipicolinate from L-aspartate: step 4/4. Its function is as follows. Catalyzes the conversion of 4-hydroxy-tetrahydrodipicolinate (HTPA) to tetrahydrodipicolinate. This Legionella pneumophila (strain Lens) protein is 4-hydroxy-tetrahydrodipicolinate reductase.